The following is a 183-amino-acid chain: Inner membrane-spanning protein YciB (183 aa).

5 consecutive transmembrane segments (helical) span residues 10–30 (LVIF…GALI), 50–70 (MHLI…VFHD), 72–92 (AFIK…LAVS), 118–138 (VTWY…YVAF), and 148–168 (FKVF…VIYL).

Belongs to the YciB family.

Its subcellular location is the cell inner membrane. Its function is as follows. Plays a role in cell envelope biogenesis, maintenance of cell envelope integrity and membrane homeostasis. This Shewanella sediminis (strain HAW-EB3) protein is Inner membrane-spanning protein YciB.